The primary structure comprises 855 residues: MGDEKLSRHTSLKRARSLSESIKGLFKPSGISGSNNAAAPSSRPGQDQAHSHQTARIITSNVSSPSISPVHSPVLQAAPKHHKLGVPNIAKLSLSPSREPSLNSENEMFSQESFISEKDEDEANLLEREDLQNKKEEKARAKHVRSKEAYVPHHRYTGGSDEVERQPRERLKNFPQNAGSSNPANSNANHVLDQENNFSIDAMLDYDEESKLRRRNSLGVRNHSNRTRSRKNSLSTPRSPPMKNGNDGMNSNATNNVGNGTGNRIYMRGRNQSDSISASSLPKFQEIECKCILDLGHFKVFENGYHEHSLRVLPIITNNKNVDSGDEKDADASVNSGDDGDNDSEANMHKQKSVFSLSGLFKSHKDGNQQQQQQQQQEENGEQINLEKAFSIIPSQRFIKSQTVKKSRTSNLKNGNNDELMKNDGKNIPQIVNPNAAVGAEELKLINALSEKIRKGLKSENTKGNNGEGRSNSNKQEDSDDTEGKAGTTNDDTSHKPCSQKYGKYIGVVGAGAYGVVKICARCKTAKDVLPYSTYSNGKKLFFAVKELKPKPGDQIDKFCTRLTSEFIIGHSLSHPHFEANAMIAGNVSRTTPPKHVFNAPNILKILDLMEYSNSFVEVMEFCASGDLYSLLTRNNISNESNNGSSRLIQTVKEGSGSPLHPLEADCFMKQLLNGVQYMHDHGIAHCDLKPENILFQPNGLLKICDFGTSSVFQTAWEKHVHFQSGAMGSEPYVAPEEFIRDAEYDPRLVDCWSCGIVYCTMVMGQYLWKIAIPEKDSLFKSFLSEIKDDGQFYLFEELRHVSSELNRLRKIALYRTFQVDPTKRITIEQLLQSSWMRKTKCCVVYRPLHTKVSK.

Disordered regions lie at residues Met1 to Gln166 and Arg214 to Thr261. Phosphoserine occurs at positions 17 and 19. Over residues Ile31–Gly45 the composition is skewed to polar residues. Over residues Ile57–Val74 the composition is skewed to low complexity. Phosphoserine is present on residues Ser68 and Ser72. Residues Leu94 to Phe114 show a composition bias toward polar residues. Residues Leu125–Ala139 show a composition bias toward basic and acidic residues. Residue Ser160 is modified to Phosphoserine. A compositionally biased stretch (low complexity) spans Gly248–Gly258. Ser273, Ser277, Ser324, Ser333, Ser336, Ser358, Ser391, and Ser395 each carry phosphoserine. The segment at Asn319–Asn347 is disordered. Disordered stretches follow at residues Ser401–Asn427 and Leu457–Pro497. Over residues Thr462–Asn474 the composition is skewed to polar residues. The 335-residue stretch at Gly503–Met837 folds into the Protein kinase domain. ATP contacts are provided by residues Val509–Val517 and Lys546. Asp688 functions as the Proton acceptor in the catalytic mechanism.

Belongs to the protein kinase superfamily. CAMK Ser/Thr protein kinase family. NPR/HAL subfamily. HAL5 sub-subfamily.

It catalyses the reaction L-seryl-[protein] + ATP = O-phospho-L-seryl-[protein] + ADP + H(+). It carries out the reaction L-threonyl-[protein] + ATP = O-phospho-L-threonyl-[protein] + ADP + H(+). Protein kinase involved in salt tolerance and pH sensitivity, probably by regulating plasma membrane potential and cation influx. Positively controls the TRK1-TRK2 potassium transport system in response to potassium starvation. Stabilizes TRK1 in the plasma membrane by preventing its vacuolar sorting and degradation. Also stabilizes other plasma membrane nutrient transporters like CAN1, FUR4 and HXT1. May itself be subject to regulation by ARL1. The chain is Serine/threonine-protein kinase HAL5 (HAL5) from Saccharomyces cerevisiae (strain YJM789) (Baker's yeast).